Consider the following 229-residue polypeptide: Ribulose-phosphate 3-epimerase (229 aa).

Ser-13 contributes to the substrate binding site. Residues His-36, Asp-38, and His-69 each coordinate a divalent metal cation. The active-site Proton acceptor is the Asp-38. Substrate-binding positions include His-69, 145–148 (GFGG), 178–180 (DGG), and 200–201 (GS). Asp-178 is an a divalent metal cation binding site. Asp-178 functions as the Proton donor in the catalytic mechanism.

The protein belongs to the ribulose-phosphate 3-epimerase family. It depends on a divalent metal cation as a cofactor.

It catalyses the reaction D-ribulose 5-phosphate = D-xylulose 5-phosphate. It functions in the pathway carbohydrate degradation. Its function is as follows. Catalyzes the reversible epimerization of D-ribulose 5-phosphate to D-xylulose 5-phosphate. In Mycobacterium bovis (strain ATCC BAA-935 / AF2122/97), this protein is Ribulose-phosphate 3-epimerase.